Consider the following 450-residue polypeptide: Phosphoglucosamine mutase (450 aa).

The active-site Phosphoserine intermediate is the Ser-101. Ser-101, Asp-240, Asp-242, and Asp-244 together coordinate Mg(2+). The residue at position 101 (Ser-101) is a Phosphoserine.

Belongs to the phosphohexose mutase family. The cofactor is Mg(2+). Post-translationally, activated by phosphorylation.

The enzyme catalyses alpha-D-glucosamine 1-phosphate = D-glucosamine 6-phosphate. Its function is as follows. Catalyzes the conversion of glucosamine-6-phosphate to glucosamine-1-phosphate. The polypeptide is Phosphoglucosamine mutase (Streptococcus pneumoniae (strain Hungary19A-6)).